We begin with the raw amino-acid sequence, 751 residues long: MQGGEPASVMKVSESEGKLEGLATAVTPNKNSGNSSCGGAISSSSSNSSRGGSAKGWQYSDHMESVNGYLMKYTNLVTGWQYRFFVLNNEAGLLEYFVNEQSRNQKPRGTLQLAGAVISPSDEDSHTFTVNAASGEQYKLRATDAKERQHWVSRLQICTQHHTEAIGKNNPPLKSRSFSLASSGNSPISQRRPSQNAMSFFNVGHSKLQSVNKRAHLHPDHLVEVREMMSHAEGQQRDLIRRIECLPASGLLSSLDQDLLMLKATSMATMNCLNDCFHILQLQHASHQKGALPSGTTIEWLEPKIPLSNHYKNGAEQPFATEPNKPMGAPEAQCVAESGVLAREPEDISADDEVEDTCDNKEDDLGAVEEQRSVILHLLSQLKLGMDLTRVVLPTFILEKRSLLEMYADFMSHPDLFIGITNGATPEDRMIRFVEYYLTSFHEGRKGAIAKKPYNPIIGETFHCSWRMPKSEVASGVSSSSSTPAITDHAPLPEEAPTQSVSDCYTVRFVAEQVSHHPPVSGFYAECAERKMCVNAHVWTKSKFLGMSIGVTMVGEGVLCLLEHGEEYTFSLPCAYARSILTVPWVELGGKVSVNCAKTGYSASITFHTKPFYGGKLHRVTAEVKYNLTNTVVCRVQGEWNSVLEFTYSNGETKFVDLAKLAVTKKRVRPLEKQDPFESRRLWKNVTDSLRESEIDKATEHKRSLEERQRTEERLRTETGTPWKTKYFIKEGDGWVYHKPLWKGIPSQPAE.

N-acetylmethionine is present on methionine 1. The disordered stretch occupies residues 1-57 (MQGGEPASVMKVSESEGKLEGLATAVTPNKNSGNSSCGGAISSSSSNSSRGGSAKGW). Phosphoserine is present on serine 15. Position 27 is a phosphothreonine (threonine 27). Over residues 31–52 (NSGNSSCGGAISSSSSNSSRGG) the composition is skewed to low complexity. Residues 63 to 160 (MESVNGYLMK…WVSRLQICTQ (98 aa)) enclose the PH domain. Residues serine 177, serine 179, serine 182, serine 186, serine 189, and serine 194 each carry the phosphoserine modification. Disordered regions lie at residues 475–497 (SGVS…EEAP) and 694–716 (EIDK…ERLR).

It belongs to the OSBP family. In terms of assembly, heterodimer with OSBPL9.

The protein localises to the late endosome membrane. The protein resides in the golgi apparatus. It is found in the trans-Golgi network membrane. The catalysed reaction is a 1,2-diacyl-sn-glycero-3-phospho-(1D-myo-inositol 4-phosphate)(out) + a 1,2-diacyl-sn-glycero-3-phospho-L-serine(in) = a 1,2-diacyl-sn-glycero-3-phospho-(1D-myo-inositol 4-phosphate)(in) + a 1,2-diacyl-sn-glycero-3-phospho-L-serine(out). Its function is as follows. Plays a role in regulating ADIPOQ and FABP4 levels in differentiating adipocytes and is also involved in regulation of adipocyte triglyceride storage. Weakly binds 25-hydroxycholesterol. Interacts with OSBPL9 to function as lipid transfer proteins. Together they form a heterodimer that localizes at the ER-trans-Golgi membrane contact sites, and exchanges phosphatidylserine (1,2-diacyl-sn-glycero-3-phospho-L-serine, PS) for phosphatidylinositol-4-phosphate (1,2-diacyl-sn-glycero-3-phospho-(1D-myo-inositol 4-phosphate), PI(4)P) between the two organelles, a step that is critical for sphingomyelin synthesis in the Golgi complex. The polypeptide is Oxysterol-binding protein-related protein 11 (Osbpl11) (Mus musculus (Mouse)).